Reading from the N-terminus, the 458-residue chain is Glutamyl-tRNA(Gln) amidotransferase subunit D (458 aa).

The Asparaginase/glutaminase domain maps to 97 to 434; it reads PNVSVMSTGG…KEVERLMRTN (338 aa). Catalysis depends on residues Thr107, Thr185, Asp186, and Lys264.

It belongs to the asparaginase 1 family. GatD subfamily. Heterodimer of GatD and GatE.

The enzyme catalyses L-glutamyl-tRNA(Gln) + L-glutamine + ATP + H2O = L-glutaminyl-tRNA(Gln) + L-glutamate + ADP + phosphate + H(+). Its function is as follows. Allows the formation of correctly charged Gln-tRNA(Gln) through the transamidation of misacylated Glu-tRNA(Gln) in organisms which lack glutaminyl-tRNA synthetase. The reaction takes place in the presence of glutamine and ATP through an activated gamma-phospho-Glu-tRNA(Gln). The GatDE system is specific for glutamate and does not act on aspartate. The sequence is that of Glutamyl-tRNA(Gln) amidotransferase subunit D from Methanopyrus kandleri (strain AV19 / DSM 6324 / JCM 9639 / NBRC 100938).